We begin with the raw amino-acid sequence, 359 residues long: 1-deoxy-D-xylulose 5-phosphate reductoisomerase (359 aa).

Positions 7, 8, 9, 10, 31, 33, and 111 each coordinate NADPH. A 1-deoxy-D-xylulose 5-phosphate-binding site is contributed by Lys112. Glu113 lines the NADPH pocket. Asp131 serves as a coordination point for Mn(2+). Residues Ser132, Glu133, Ser155, and His178 each contribute to the 1-deoxy-D-xylulose 5-phosphate site. Glu133 contributes to the Mn(2+) binding site. Residue Gly184 coordinates NADPH. 1-deoxy-D-xylulose 5-phosphate is bound by residues Ser191, Asn196, Lys197, and Glu200. Glu200 lines the Mn(2+) pocket.

Belongs to the DXR family. Mg(2+) serves as cofactor. It depends on Mn(2+) as a cofactor.

It carries out the reaction 2-C-methyl-D-erythritol 4-phosphate + NADP(+) = 1-deoxy-D-xylulose 5-phosphate + NADPH + H(+). Its pathway is isoprenoid biosynthesis; isopentenyl diphosphate biosynthesis via DXP pathway; isopentenyl diphosphate from 1-deoxy-D-xylulose 5-phosphate: step 1/6. Functionally, catalyzes the NADPH-dependent rearrangement and reduction of 1-deoxy-D-xylulose-5-phosphate (DXP) to 2-C-methyl-D-erythritol 4-phosphate (MEP). The protein is 1-deoxy-D-xylulose 5-phosphate reductoisomerase of Campylobacter hominis (strain ATCC BAA-381 / DSM 21671 / CCUG 45161 / LMG 19568 / NCTC 13146 / CH001A).